The chain runs to 565 residues: Alkaline nuclease (565 aa).

Belongs to the herpesviridae alkaline nuclease family. Interacts with major DNA-binding protein; this interaction increases the nuclease processivity of the alkaline exonuclease.

Its subcellular location is the host nucleus. The protein resides in the host cytoplasm. Its function is as follows. Plays a role in processing non linear or branched viral DNA intermediates in order to promote the production of mature packaged unit-length linear progeny viral DNA molecules. Exhibits endonuclease and exonuclease activities and accepts both double-stranded and single-stranded DNA as substrate. Exonuclease digestion of DNA is in the 5'-&gt; 3' direction and the products are 5'-monophosphate nucleosides. Additionally, forms a recombinase with the major DNA-binding protein, which displays strand exchange activity. This is Alkaline nuclease from Equus caballus (Horse).